The following is a 662-amino-acid chain: Protein-arginine deiminase type-1 (662 aa).

Positions 153, 155, 157, 164, 175, 178, 350, 352, 363, 370, 371, 374, 408, and 411 each coordinate Ca(2+). Residue cysteine 644 is the Nucleophile of the active site.

It belongs to the protein arginine deiminase family. Monomer. It depends on Ca(2+) as a cofactor. In terms of tissue distribution, expressed only in the epidermis and uterus.

It is found in the cytoplasm. It catalyses the reaction L-arginyl-[protein] + H2O = L-citrullyl-[protein] + NH4(+). In terms of biological role, catalyzes the deimination of arginine residues of proteins. The protein is Protein-arginine deiminase type-1 (Padi1) of Mus musculus (Mouse).